The chain runs to 378 residues: Cytochrome P450 monooxygenase pytD (378 aa).

Heme is bound at residue Cys-321.

The protein belongs to the cytochrome P450 family. Requires heme as cofactor.

It participates in secondary metabolite biosynthesis. In terms of biological role, cytochrome P450 monooxygenase pytD; part of the gene cluster that mediates the biosynthesis of pyranterreones, a family of antioxidative compounds. The first step of pyranonigrins biosynthesis is performed by the hybrid PKS-NRPS synthetase pytA that condenses 4 malonyl-CoA units ato the acetyl starter unit by the modular PKS of pytA. The acyl chain is then connected to an L-serine through the amide bond by the modular NRPS of pytA. A tetramic acid is formed and released from the PKS-NRPS pytA to give pyranterreone 5 with the help of the thioesterase pytI. Pyranterreone 5 could be methylated by pytC to afford pyranterreone 6. Both pyranterreones 5 and 6 are subsequently oxidized by the FAD-linked oxidoreductase pytB and the cytochrome P450 monooxygenase pytD to form the fused gamma-pyrone core, resulting in pyranterreones 7 and 11, respectively. The hydroxy group at C-8 of pyranterreones 7 and 11 are dehydrated by the aspartyl protease pytH to form a delta-7 double bond to give pyranterreones 3 and 1, 2 accordingly. The exo-methylene of pyranterreone 3 could be reduced into a pendant methyl by reductase pytE to provide pyranterreone 4, also known as cordylactam. Pyranterreone 4 can be reconverted to pyranterreone 3 through pytB-catalyzed dehydrogenation or further oxidized to pyranterreones 9 and 10. This chain is Cytochrome P450 monooxygenase pytD, found in Aspergillus terreus (strain NIH 2624 / FGSC A1156).